The sequence spans 73 residues: Large ribosomal subunit protein bL31 (73 aa).

It belongs to the bacterial ribosomal protein bL31 family. Type A subfamily. In terms of assembly, part of the 50S ribosomal subunit.

Its function is as follows. Binds the 23S rRNA. The protein is Large ribosomal subunit protein bL31 of Chelativorans sp. (strain BNC1).